A 227-amino-acid polypeptide reads, in one-letter code: Phosphatidylserine decarboxylase proenzyme (227 aa).

Residue serine 184 is the Schiff-base intermediate with substrate; via pyruvic acid of the active site. A Pyruvic acid (Ser); by autocatalysis modification is found at serine 184.

It belongs to the phosphatidylserine decarboxylase family. PSD-A subfamily. As to quaternary structure, heterodimer of a large membrane-associated beta subunit and a small pyruvoyl-containing alpha subunit. Pyruvate serves as cofactor. Post-translationally, is synthesized initially as an inactive proenzyme. Formation of the active enzyme involves a self-maturation process in which the active site pyruvoyl group is generated from an internal serine residue via an autocatalytic post-translational modification. Two non-identical subunits are generated from the proenzyme in this reaction, and the pyruvate is formed at the N-terminus of the alpha chain, which is derived from the carboxyl end of the proenzyme. The post-translation cleavage follows an unusual pathway, termed non-hydrolytic serinolysis, in which the side chain hydroxyl group of the serine supplies its oxygen atom to form the C-terminus of the beta chain, while the remainder of the serine residue undergoes an oxidative deamination to produce ammonia and the pyruvoyl prosthetic group on the alpha chain.

The protein resides in the cell membrane. It carries out the reaction a 1,2-diacyl-sn-glycero-3-phospho-L-serine + H(+) = a 1,2-diacyl-sn-glycero-3-phosphoethanolamine + CO2. Its pathway is phospholipid metabolism; phosphatidylethanolamine biosynthesis; phosphatidylethanolamine from CDP-diacylglycerol: step 2/2. Catalyzes the formation of phosphatidylethanolamine (PtdEtn) from phosphatidylserine (PtdSer). In Ehrlichia ruminantium (strain Gardel), this protein is Phosphatidylserine decarboxylase proenzyme.